Reading from the N-terminus, the 354-residue chain is Phosphate acyltransferase (354 aa).

This sequence belongs to the PlsX family. Homodimer. Probably interacts with PlsY.

It is found in the cytoplasm. The enzyme catalyses a fatty acyl-[ACP] + phosphate = an acyl phosphate + holo-[ACP]. Its pathway is lipid metabolism; phospholipid metabolism. Its function is as follows. Catalyzes the reversible formation of acyl-phosphate (acyl-PO(4)) from acyl-[acyl-carrier-protein] (acyl-ACP). This enzyme utilizes acyl-ACP as fatty acyl donor, but not acyl-CoA. The sequence is that of Phosphate acyltransferase from Nitrobacter hamburgensis (strain DSM 10229 / NCIMB 13809 / X14).